We begin with the raw amino-acid sequence, 351 residues long: UDP-3-O-acylglucosamine N-acyltransferase (351 aa).

Residue histidine 240 is the Proton acceptor of the active site.

It belongs to the transferase hexapeptide repeat family. LpxD subfamily. As to quaternary structure, homotrimer.

It carries out the reaction a UDP-3-O-[(3R)-3-hydroxyacyl]-alpha-D-glucosamine + a (3R)-hydroxyacyl-[ACP] = a UDP-2-N,3-O-bis[(3R)-3-hydroxyacyl]-alpha-D-glucosamine + holo-[ACP] + H(+). Its pathway is bacterial outer membrane biogenesis; LPS lipid A biosynthesis. Functionally, catalyzes the N-acylation of UDP-3-O-acylglucosamine using 3-hydroxyacyl-ACP as the acyl donor. Is involved in the biosynthesis of lipid A, a phosphorylated glycolipid that anchors the lipopolysaccharide to the outer membrane of the cell. This chain is UDP-3-O-acylglucosamine N-acyltransferase, found in Pseudomonas savastanoi pv. phaseolicola (strain 1448A / Race 6) (Pseudomonas syringae pv. phaseolicola (strain 1448A / Race 6)).